The sequence spans 214 residues: uncharacterized protein (214 aa).

The N-terminal 49 residues, 1–49 (MATRGAVAAAASTIWKHRRNPSLRSLSRHFNPNFNHRIIPTGFKYQVRA), are a transit peptide targeting the chloroplast.

It localises to the plastid. The protein resides in the chloroplast. This is an uncharacterized protein from Arabidopsis thaliana (Mouse-ear cress).